The following is a 120-amino-acid chain: uncharacterized protein (120 aa).

The protein localises to the cytoplasm. It is found in the nucleus. This is an uncharacterized protein from Schizosaccharomyces pombe (strain 972 / ATCC 24843) (Fission yeast).